Consider the following 478-residue polypeptide: Lactate utilization protein B (478 aa).

4Fe-4S ferredoxin-type domains follow at residues 303–333 (GTEFQSALHCIRCAACINVCPVYRHVGGHAY) and 352–381 (YDDHKELPYASSLCAACTEACPVKIPLHEQ). Residues Cys312, Cys315, Cys318, Cys322, Cys365, Cys368, and Cys372 each coordinate [4Fe-4S] cluster.

This sequence belongs to the LutB/YkgF family.

Is involved in L-lactate degradation and allows cells to grow with lactate as the sole carbon source. Has probably a role as an electron transporter during oxidation of L-lactate. The polypeptide is Lactate utilization protein B (Oceanobacillus iheyensis (strain DSM 14371 / CIP 107618 / JCM 11309 / KCTC 3954 / HTE831)).